The following is a 303-amino-acid chain: Ribosomal RNA small subunit methyltransferase H (303 aa).

S-adenosyl-L-methionine is bound by residues 32–34 (GGH), Asp-52, Phe-78, Asp-99, and Gln-106.

It belongs to the methyltransferase superfamily. RsmH family.

Its subcellular location is the cytoplasm. It catalyses the reaction cytidine(1402) in 16S rRNA + S-adenosyl-L-methionine = N(4)-methylcytidine(1402) in 16S rRNA + S-adenosyl-L-homocysteine + H(+). In terms of biological role, specifically methylates the N4 position of cytidine in position 1402 (C1402) of 16S rRNA. This is Ribosomal RNA small subunit methyltransferase H from Acinetobacter baylyi (strain ATCC 33305 / BD413 / ADP1).